The sequence spans 369 residues: D-glucosaminate-6-phosphate ammonia lyase (369 aa).

Lys213 is modified (N6-(pyridoxal phosphate)lysine).

This sequence belongs to the SelA family. Pyridoxal 5'-phosphate serves as cofactor.

It carries out the reaction 2-amino-2-deoxy-D-gluconate 6-phosphate = 2-dehydro-3-deoxy-6-phospho-D-gluconate + NH4(+). In terms of biological role, involved in the catabolism of D-glucosaminate. Catalyzes the conversion of D-glucosaminate 6-phosphate to yield keto-3-deoxygluconate 6-phosphate (KDGP). The sequence is that of D-glucosaminate-6-phosphate ammonia lyase from Salmonella typhimurium (strain 14028s / SGSC 2262).